We begin with the raw amino-acid sequence, 95 residues long: Co-chaperonin GroES (95 aa).

It belongs to the GroES chaperonin family. Heptamer of 7 subunits arranged in a ring. Interacts with the chaperonin GroEL.

The protein resides in the cytoplasm. In terms of biological role, together with the chaperonin GroEL, plays an essential role in assisting protein folding. The GroEL-GroES system forms a nano-cage that allows encapsulation of the non-native substrate proteins and provides a physical environment optimized to promote and accelerate protein folding. GroES binds to the apical surface of the GroEL ring, thereby capping the opening of the GroEL channel. In Caldicellulosiruptor bescii (strain ATCC BAA-1888 / DSM 6725 / KCTC 15123 / Z-1320) (Anaerocellum thermophilum), this protein is Co-chaperonin GroES.